The chain runs to 336 residues: Inactive serine/threonine-protein kinase BKN2 (336 aa).

The segment at 1–25 (MGNCLKPLKEQPPSASPKPLTIPSS) is disordered. The N-myristoyl glycine moiety is linked to residue G2. A lipid anchor (S-palmitoyl cysteine) is attached at C4. The 281-residue stretch at 52 to 332 (YMVIKGNDNG…QVFDGLNDIA (281 aa)) folds into the Protein kinase domain.

It belongs to the protein kinase superfamily. Ser/Thr protein kinase family. As to quaternary structure, component of an immune signaling complex made of, at least, SZE1, BKN2/SZE2, ZAR1 and ZED1. Interacts directly with ZAR1 and Pseudomonas syringae HOPZ1A at the plasma membrane. Post-translationally, N-terminal myristoylation is critical for plasma membrane localization and implication in defense responses. Expressed in stigma and ovaries in flowers, and in stems and seedlings.

It localises to the cell membrane. In terms of biological role, together with SZE1 and ZED1, required for effector-triggered immunity (e.g. Pseudomonas syringae type III effector HopZ1a) via the activation of ZAR1, thus being essential for resistance against P. syringae pv. tomato DC3000 expressing HopZ1a. Collaboratively with BKN1, involved in compatible pollen-stigma interactions. The chain is Inactive serine/threonine-protein kinase BKN2 from Arabidopsis thaliana (Mouse-ear cress).